Reading from the N-terminus, the 174-residue chain is dCTP deaminase, dUMP-forming (174 aa).

DCTP contacts are provided by residues 93 to 98, D111, 119 to 121, Q138, and Y151; these read RSSIGR and TLE. The active-site Proton donor/acceptor is the E121.

It belongs to the dCTP deaminase family. Homotrimer.

It catalyses the reaction dCTP + 2 H2O = dUMP + NH4(+) + diphosphate. The protein operates within pyrimidine metabolism; dUMP biosynthesis; dUMP from dCTP: step 1/1. Its function is as follows. Bifunctional enzyme that catalyzes both the deamination of dCTP to dUTP and the hydrolysis of dUTP to dUMP without releasing the toxic dUTP intermediate. This is dCTP deaminase, dUMP-forming from Leptospira biflexa serovar Patoc (strain Patoc 1 / Ames).